A 373-amino-acid chain; its full sequence is tRNA-specific 2-thiouridylase MnmA (373 aa).

Residues 12–19 and Met38 contribute to the ATP site; that span reads GMSGGVDS. The interaction with target base in tRNA stretch occupies residues 98–100; it reads NPD. Cys103 functions as the Nucleophile in the catalytic mechanism. A disulfide bridge links Cys103 with Cys200. Gly127 is an ATP binding site. The interaction with tRNA stretch occupies residues 150–152; sequence KDQ. Cys200 functions as the Cysteine persulfide intermediate in the catalytic mechanism. An interaction with tRNA region spans residues 312-313; sequence RY.

This sequence belongs to the MnmA/TRMU family.

It is found in the cytoplasm. The enzyme catalyses S-sulfanyl-L-cysteinyl-[protein] + uridine(34) in tRNA + AH2 + ATP = 2-thiouridine(34) in tRNA + L-cysteinyl-[protein] + A + AMP + diphosphate + H(+). In terms of biological role, catalyzes the 2-thiolation of uridine at the wobble position (U34) of tRNA, leading to the formation of s(2)U34. This chain is tRNA-specific 2-thiouridylase MnmA, found in Streptococcus pyogenes serotype M49 (strain NZ131).